We begin with the raw amino-acid sequence, 310 residues long: Transcription factor RAX3 (310 aa).

2 HTH myb-type domains span residues 9 to 62 (KANV…LNYL) and 63 to 117 (RPNI…KKKL). DNA-binding regions (H-T-H motif) lie at residues 38–62 (WIAL…LNYL) and 90–113 (WSII…NTRL).

In terms of tissue distribution, ubiquitous.

It is found in the nucleus. Transcription activator. Positively regulates axillary meristems (AMs) formation and development, especially during inflorescence. The sequence is that of Transcription factor RAX3 (RAX3) from Arabidopsis thaliana (Mouse-ear cress).